Consider the following 529-residue polypeptide: Biotin-dependent 3-methylcrotonyl-coenzyme A carboxylase beta1 subunit (529 aa).

The CoA carboxyltransferase N-terminal domain maps to H16 to R272. Positions E275–Q521 constitute a CoA carboxyltransferase C-terminal domain.

Belongs to the AccD/PCCB family. As to quaternary structure, the biotin-dependent acyl-CoA carboxylase complex is composed of AccA1, which contains the biotin carboxylase (BC) and biotin carboxyl carrier protein (BCCP) domains, and AccD1, which contains the carboxyl transferase (CT) domain. The AccA1/AccD1 complex forms a dodecamer.

The enzyme catalyses 3-methylbut-2-enoyl-CoA + N(6)-carboxybiotinyl-L-lysyl-[protein] = 3-methyl-(2E)-glutaconyl-CoA + N(6)-biotinyl-L-lysyl-[protein]. It participates in amino-acid degradation; L-leucine degradation. In terms of biological role, component of a biotin-dependent acyl-CoA carboxylase complex. This subunit transfers the CO2 from carboxybiotin to the CoA ester substrate. When associated with the alpha1 subunit AccA1, is involved in branched amino-acid catabolism with methylcrotonyl coenzyme A as the substrate. Shows residual with propionyl-CoA and acetyl-CoA. This chain is Biotin-dependent 3-methylcrotonyl-coenzyme A carboxylase beta1 subunit, found in Mycobacterium tuberculosis (strain ATCC 25618 / H37Rv).